We begin with the raw amino-acid sequence, 293 residues long: 4-diphosphocytidyl-2-C-methyl-D-erythritol kinase (293 aa).

Lys16 is a catalytic residue. Pro99–Ser109 is a binding site for ATP. The active site involves Asp141.

The protein belongs to the GHMP kinase family. IspE subfamily.

It carries out the reaction 4-CDP-2-C-methyl-D-erythritol + ATP = 4-CDP-2-C-methyl-D-erythritol 2-phosphate + ADP + H(+). It participates in isoprenoid biosynthesis; isopentenyl diphosphate biosynthesis via DXP pathway; isopentenyl diphosphate from 1-deoxy-D-xylulose 5-phosphate: step 3/6. Its function is as follows. Catalyzes the phosphorylation of the position 2 hydroxy group of 4-diphosphocytidyl-2C-methyl-D-erythritol. The sequence is that of 4-diphosphocytidyl-2-C-methyl-D-erythritol kinase from Burkholderia multivorans (strain ATCC 17616 / 249).